We begin with the raw amino-acid sequence, 499 residues long: MAKQKIRVRYAPSPTGHLHIGNARTALFNYLFARHNKGTMVLRIEDTDQKRNVEGGSKSQMENLHWLGIDWDEGPDKGGDFGPYRQSERKDIYNKYIKQLIDEGKAYYSYKTEEELEAQREEQRAMGIAPHYTYEYEGMTADEIKQAQADAEAKGLKPVVRIHIPENRTYAWDDMVKGKVSFESDTIGGDFVIQKRDGMPTYNFAVVIDDHLMEITHVLRGDDHVANTPKQLVVYEALGWEPPKFGHMTLIINSETGKKLSKRDESVLQFIEQYRDLGYLPEAMFNFITLLGWSPVGESEIFSQRELIKSFDPKRLSKSPAAFDQKKLEWINNQYVKKADRDVLLDLALNNLQEAGLVGKEVSPEKMEWVRQLVNIYAVQMSYTKQIVDITKIFFEEAPELSDAEVEEIKKDDARPVIEEFKKQLNAIPRFTAVQVMNAIQATRRETGVKGRKLFMPIRIAATRSMVGPGIGEAIELMGKEKVNKHIDLTLKQLSDLGL.

The 'HIGH' region motif lies at 12-22; the sequence is PSPTGHLHIGN. The short motif at 259 to 263 is the 'KMSKS' region element; that stretch reads KLSKR. Lys-262 contributes to the ATP binding site.

This sequence belongs to the class-I aminoacyl-tRNA synthetase family. Glutamate--tRNA ligase type 1 subfamily. Monomer.

The protein resides in the cytoplasm. The catalysed reaction is tRNA(Glu) + L-glutamate + ATP = L-glutamyl-tRNA(Glu) + AMP + diphosphate. Catalyzes the attachment of glutamate to tRNA(Glu) in a two-step reaction: glutamate is first activated by ATP to form Glu-AMP and then transferred to the acceptor end of tRNA(Glu). This chain is Glutamate--tRNA ligase, found in Lactobacillus gasseri (strain ATCC 33323 / DSM 20243 / BCRC 14619 / CIP 102991 / JCM 1131 / KCTC 3163 / NCIMB 11718 / NCTC 13722 / AM63).